Reading from the N-terminus, the 228-residue chain is Lipoprotein-releasing system ATP-binding protein LolD 2 (228 aa).

Residues 9 to 228 form the ABC transporter domain; the sequence is RGLERVYKTE…KDGHLELQRV (220 aa). 42–49 is a binding site for ATP; it reads GPSGSGKS.

It belongs to the ABC transporter superfamily. Lipoprotein translocase (TC 3.A.1.125) family. As to quaternary structure, the complex is composed of two ATP-binding proteins (LolD) and two transmembrane proteins (LolC and LolE).

The protein localises to the cell inner membrane. Functionally, part of the ABC transporter complex LolCDE involved in the translocation of mature outer membrane-directed lipoproteins, from the inner membrane to the periplasmic chaperone, LolA. Responsible for the formation of the LolA-lipoprotein complex in an ATP-dependent manner. This is Lipoprotein-releasing system ATP-binding protein LolD 2 from Caulobacter vibrioides (strain ATCC 19089 / CIP 103742 / CB 15) (Caulobacter crescentus).